The chain runs to 195 residues: MNYIPYVIEKTGRGERSYDIYSRLLKDRIIMLSGEINDGVASSIVSQMLFLEAEDPEKDIYLYINSPGGVITSGMSIYDTMNYVKPDICTICIGQAASMGAFLLSCGTKGKRFSLPNSRIMIHQPLGGAQGQATDIEIQAKEILRLKSILNGILASNTGQPLEKIAKDTDRDFFMSAQESKEYGLIDNVLEKSFK.

Catalysis depends on S98, which acts as the Nucleophile. Residue H123 is part of the active site.

Belongs to the peptidase S14 family. In terms of assembly, fourteen ClpP subunits assemble into 2 heptameric rings which stack back to back to give a disk-like structure with a central cavity, resembling the structure of eukaryotic proteasomes.

It is found in the cytoplasm. The enzyme catalyses Hydrolysis of proteins to small peptides in the presence of ATP and magnesium. alpha-casein is the usual test substrate. In the absence of ATP, only oligopeptides shorter than five residues are hydrolyzed (such as succinyl-Leu-Tyr-|-NHMec, and Leu-Tyr-Leu-|-Tyr-Trp, in which cleavage of the -Tyr-|-Leu- and -Tyr-|-Trp bonds also occurs).. Cleaves peptides in various proteins in a process that requires ATP hydrolysis. Has a chymotrypsin-like activity. Plays a major role in the degradation of misfolded proteins. The protein is ATP-dependent Clp protease proteolytic subunit of Wolinella succinogenes (strain ATCC 29543 / DSM 1740 / CCUG 13145 / JCM 31913 / LMG 7466 / NCTC 11488 / FDC 602W) (Vibrio succinogenes).